The following is a 230-amino-acid chain: Ribose-5-phosphate isomerase A (230 aa).

Residues 31–34 (TGST), 88–91 (DGSD), and 101–104 (KGGG) contribute to the substrate site. Glu-110 (proton acceptor) is an active-site residue. Lys-128 serves as a coordination point for substrate.

Belongs to the ribose 5-phosphate isomerase family. Homodimer.

It carries out the reaction aldehydo-D-ribose 5-phosphate = D-ribulose 5-phosphate. The protein operates within carbohydrate degradation; pentose phosphate pathway; D-ribose 5-phosphate from D-ribulose 5-phosphate (non-oxidative stage): step 1/1. Its function is as follows. Catalyzes the reversible conversion of ribose-5-phosphate to ribulose 5-phosphate. This Lactobacillus acidophilus (strain ATCC 700396 / NCK56 / N2 / NCFM) protein is Ribose-5-phosphate isomerase A.